A 338-amino-acid chain; its full sequence is tRNA N6-adenosine threonylcarbamoyltransferase (338 aa).

His-114 and His-118 together coordinate Fe cation. Substrate contacts are provided by residues 136-140 (LVSGG), Asp-169, Gly-182, Asp-186, and Asn-275. Asp-301 contributes to the Fe cation binding site.

This sequence belongs to the KAE1 / TsaD family. Fe(2+) is required as a cofactor.

It localises to the cytoplasm. The enzyme catalyses L-threonylcarbamoyladenylate + adenosine(37) in tRNA = N(6)-L-threonylcarbamoyladenosine(37) in tRNA + AMP + H(+). Required for the formation of a threonylcarbamoyl group on adenosine at position 37 (t(6)A37) in tRNAs that read codons beginning with adenine. Is involved in the transfer of the threonylcarbamoyl moiety of threonylcarbamoyl-AMP (TC-AMP) to the N6 group of A37, together with TsaE and TsaB. TsaD likely plays a direct catalytic role in this reaction. The sequence is that of tRNA N6-adenosine threonylcarbamoyltransferase from Streptococcus equi subsp. equi (strain 4047).